Reading from the N-terminus, the 957-residue chain is Protein translocase subunit SecA (957 aa).

Residues Q86, 104–108 (GEGKT), and D494 each bind ATP. The segment covering 929–947 (SRPAPAPTAAASPDPSSAS) has biased composition (low complexity). The disordered stretch occupies residues 929-957 (SRPAPAPTAAASPDPSSASGVVEADFTEE).

Belongs to the SecA family. In terms of assembly, monomer and homodimer. Part of the essential Sec protein translocation apparatus which comprises SecA, SecYEG and auxiliary proteins SecDF. Other proteins may also be involved.

It localises to the cell inner membrane. Its subcellular location is the cellular thylakoid membrane. The protein resides in the cytoplasm. The enzyme catalyses ATP + H2O + cellular proteinSide 1 = ADP + phosphate + cellular proteinSide 2.. Its function is as follows. Part of the Sec protein translocase complex. Interacts with the SecYEG preprotein conducting channel. Has a central role in coupling the hydrolysis of ATP to the transfer of proteins into and across the cell membrane, serving as an ATP-driven molecular motor driving the stepwise translocation of polypeptide chains across the membrane. In terms of biological role, probably participates in protein translocation into and across both the cytoplasmic and thylakoid membranes in cyanobacterial cells. The sequence is that of Protein translocase subunit SecA from Synechococcus sp. (strain JA-2-3B'a(2-13)) (Cyanobacteria bacterium Yellowstone B-Prime).